The sequence spans 275 residues: Ribosomal RNA small subunit methyltransferase A (275 aa).

6 residues coordinate S-adenosyl-L-methionine: Asn-21, Leu-23, Gly-48, Glu-69, Asp-94, and Asn-115.

This sequence belongs to the class I-like SAM-binding methyltransferase superfamily. rRNA adenine N(6)-methyltransferase family. RsmA subfamily.

It localises to the cytoplasm. The catalysed reaction is adenosine(1518)/adenosine(1519) in 16S rRNA + 4 S-adenosyl-L-methionine = N(6)-dimethyladenosine(1518)/N(6)-dimethyladenosine(1519) in 16S rRNA + 4 S-adenosyl-L-homocysteine + 4 H(+). Functionally, specifically dimethylates two adjacent adenosines (A1518 and A1519) in the loop of a conserved hairpin near the 3'-end of 16S rRNA in the 30S particle. May play a critical role in biogenesis of 30S subunits. This chain is Ribosomal RNA small subunit methyltransferase A, found in Clostridium botulinum (strain Langeland / NCTC 10281 / Type F).